Reading from the N-terminus, the 421-residue chain is UDP-N-acetylglucosamine 1-carboxyvinyltransferase (421 aa).

A phosphoenolpyruvate-binding site is contributed by 22–23; sequence KN. Residue Arg91 participates in UDP-N-acetyl-alpha-D-glucosamine binding. Residue Cys115 is the Proton donor of the active site. Cys115 carries the 2-(S-cysteinyl)pyruvic acid O-phosphothioketal modification. Residues 120–124, 160–163, Asp305, and Ile327 each bind UDP-N-acetyl-alpha-D-glucosamine; these read RPVDL and KVSV.

The protein belongs to the EPSP synthase family. MurA subfamily.

It localises to the cytoplasm. The enzyme catalyses phosphoenolpyruvate + UDP-N-acetyl-alpha-D-glucosamine = UDP-N-acetyl-3-O-(1-carboxyvinyl)-alpha-D-glucosamine + phosphate. The protein operates within cell wall biogenesis; peptidoglycan biosynthesis. Functionally, cell wall formation. Adds enolpyruvyl to UDP-N-acetylglucosamine. This is UDP-N-acetylglucosamine 1-carboxyvinyltransferase from Photorhabdus laumondii subsp. laumondii (strain DSM 15139 / CIP 105565 / TT01) (Photorhabdus luminescens subsp. laumondii).